Reading from the N-terminus, the 416-residue chain is Multifunctional CCA protein (416 aa).

ATP contacts are provided by Gly8 and Arg11. Positions 8 and 11 each coordinate CTP. 2 residues coordinate Mg(2+): Asp21 and Asp23. ATP contacts are provided by Arg91, Arg138, and Arg141. Positions 91, 138, and 141 each coordinate CTP. The HD domain occupies 229-331 (TGLHQELVSD…YELLQRCDAF (103 aa)).

Belongs to the tRNA nucleotidyltransferase/poly(A) polymerase family. Bacterial CCA-adding enzyme type 1 subfamily. In terms of assembly, monomer. Can also form homodimers and oligomers. Mg(2+) is required as a cofactor. Requires Ni(2+) as cofactor.

It carries out the reaction a tRNA precursor + 2 CTP + ATP = a tRNA with a 3' CCA end + 3 diphosphate. The enzyme catalyses a tRNA with a 3' CCA end + 2 CTP + ATP = a tRNA with a 3' CCACCA end + 3 diphosphate. Catalyzes the addition and repair of the essential 3'-terminal CCA sequence in tRNAs without using a nucleic acid template. Adds these three nucleotides in the order of C, C, and A to the tRNA nucleotide-73, using CTP and ATP as substrates and producing inorganic pyrophosphate. tRNA 3'-terminal CCA addition is required both for tRNA processing and repair. Also involved in tRNA surveillance by mediating tandem CCA addition to generate a CCACCA at the 3' terminus of unstable tRNAs. While stable tRNAs receive only 3'-terminal CCA, unstable tRNAs are marked with CCACCA and rapidly degraded. The protein is Multifunctional CCA protein of Xylella fastidiosa (strain M23).